The following is a 453-amino-acid chain: tRNA modification GTPase MnmE (453 aa).

(6S)-5-formyl-5,6,7,8-tetrahydrofolate-binding residues include arginine 22, glutamate 79, and lysine 119. Residues 215–376 (GMKVVIAGRP…LKQHLKSLMG (162 aa)) enclose the TrmE-type G domain. Residue asparagine 225 coordinates K(+). GTP is bound by residues 225-230 (NAGKSS), 244-250 (TEIAGTT), 269-272 (DTAG), and 334-337 (NKAD). Serine 229 is a Mg(2+) binding site. Positions 244, 246, and 249 each coordinate K(+). Mg(2+) is bound at residue threonine 250. Position 453 (lysine 453) interacts with (6S)-5-formyl-5,6,7,8-tetrahydrofolate.

The protein belongs to the TRAFAC class TrmE-Era-EngA-EngB-Septin-like GTPase superfamily. TrmE GTPase family. In terms of assembly, homodimer. Heterotetramer of two MnmE and two MnmG subunits. K(+) is required as a cofactor.

The protein resides in the cytoplasm. Exhibits a very high intrinsic GTPase hydrolysis rate. Involved in the addition of a carboxymethylaminomethyl (cmnm) group at the wobble position (U34) of certain tRNAs, forming tRNA-cmnm(5)s(2)U34. This is tRNA modification GTPase MnmE from Shewanella oneidensis (strain ATCC 700550 / JCM 31522 / CIP 106686 / LMG 19005 / NCIMB 14063 / MR-1).